The chain runs to 193 residues: Pyridoxal 5'-phosphate synthase subunit PdxT (193 aa).

Residue 48–50 (GES) participates in L-glutamine binding. Residue Cys-80 is the Nucleophile of the active site. L-glutamine is bound by residues Arg-112 and 140–141 (IR). Catalysis depends on charge relay system residues His-176 and Glu-178.

It belongs to the glutaminase PdxT/SNO family. In the presence of PdxS, forms a dodecamer of heterodimers. Only shows activity in the heterodimer.

The enzyme catalyses aldehydo-D-ribose 5-phosphate + D-glyceraldehyde 3-phosphate + L-glutamine = pyridoxal 5'-phosphate + L-glutamate + phosphate + 3 H2O + H(+). The catalysed reaction is L-glutamine + H2O = L-glutamate + NH4(+). It functions in the pathway cofactor biosynthesis; pyridoxal 5'-phosphate biosynthesis. In terms of biological role, catalyzes the hydrolysis of glutamine to glutamate and ammonia as part of the biosynthesis of pyridoxal 5'-phosphate. The resulting ammonia molecule is channeled to the active site of PdxS. The protein is Pyridoxal 5'-phosphate synthase subunit PdxT of Mycolicibacterium smegmatis (strain ATCC 700084 / mc(2)155) (Mycobacterium smegmatis).